The primary structure comprises 152 residues: MKTPIEVKILDSRIGSEYPLPAYATPGSAGMDLRAMIETSLSVAPGETRLIPTGISIHVADPSLAAVILPRSGLGHKHGIVLGNLVGLIDSDYQGPLMVSCWNRGDKPYTIEIGDRLAQLVFVPVVQAEFKLVDEFDNSLRGEGGFGHSGTS.

Substrate-binding positions include Arg71–Gly73, Asn84, Leu88–Asp90, and Met98.

The protein belongs to the dUTPase family. Mg(2+) serves as cofactor.

It carries out the reaction dUTP + H2O = dUMP + diphosphate + H(+). It functions in the pathway pyrimidine metabolism; dUMP biosynthesis; dUMP from dCTP (dUTP route): step 2/2. Its function is as follows. This enzyme is involved in nucleotide metabolism: it produces dUMP, the immediate precursor of thymidine nucleotides and it decreases the intracellular concentration of dUTP so that uracil cannot be incorporated into DNA. The sequence is that of Deoxyuridine 5'-triphosphate nucleotidohydrolase from Shewanella woodyi (strain ATCC 51908 / MS32).